A 347-amino-acid chain; its full sequence is Quinolinate synthase (347 aa).

Iminosuccinate is bound by residues His47 and Ser68. [4Fe-4S] cluster is bound at residue Cys113. Residues 139 to 141 (YAN) and Ser156 contribute to the iminosuccinate site. Position 200 (Cys200) interacts with [4Fe-4S] cluster. Residues 226–228 (HPE) and Thr243 each bind iminosuccinate. Cys297 lines the [4Fe-4S] cluster pocket.

Belongs to the quinolinate synthase family. Type 1 subfamily. The cofactor is [4Fe-4S] cluster.

It is found in the cytoplasm. The catalysed reaction is iminosuccinate + dihydroxyacetone phosphate = quinolinate + phosphate + 2 H2O + H(+). It participates in cofactor biosynthesis; NAD(+) biosynthesis; quinolinate from iminoaspartate: step 1/1. Functionally, catalyzes the condensation of iminoaspartate with dihydroxyacetone phosphate to form quinolinate. The sequence is that of Quinolinate synthase from Shigella boydii serotype 18 (strain CDC 3083-94 / BS512).